The sequence spans 390 residues: Chorismate synthase (390 aa).

Positions 39 and 45 each coordinate NADP(+). Residues 132–134 (RSS), 253–254 (NA), G298, 313–317 (KPIPT), and R339 contribute to the FMN site.

It belongs to the chorismate synthase family. As to quaternary structure, homotetramer. Requires FMNH2 as cofactor.

The catalysed reaction is 5-O-(1-carboxyvinyl)-3-phosphoshikimate = chorismate + phosphate. Its pathway is metabolic intermediate biosynthesis; chorismate biosynthesis; chorismate from D-erythrose 4-phosphate and phosphoenolpyruvate: step 7/7. Catalyzes the anti-1,4-elimination of the C-3 phosphate and the C-6 proR hydrogen from 5-enolpyruvylshikimate-3-phosphate (EPSP) to yield chorismate, which is the branch point compound that serves as the starting substrate for the three terminal pathways of aromatic amino acid biosynthesis. This reaction introduces a second double bond into the aromatic ring system. The polypeptide is Chorismate synthase (Shouchella clausii (strain KSM-K16) (Alkalihalobacillus clausii)).